The chain runs to 336 residues: Cytoskeleton protein RodZ (336 aa).

The Cytoplasmic segment spans residues Met-1 to Gly-111. The HTH cro/C1-type domain occupies Leu-19–Leu-71. The segment at residues Gln-30 to Glu-49 is a DNA-binding region (H-T-H motif). Residues Trp-112–Trp-132 traverse the membrane as a helical; Signal-anchor for type II membrane protein segment. The Periplasmic segment spans residues Trp-133–Gln-336. The segment covering Asp-148–Leu-164 has biased composition (polar residues). A disordered region spans residues Asp-148–Thr-245. Over residues Asp-165 to Thr-201 the composition is skewed to low complexity. Residues Val-202–Val-217 are compositionally biased toward polar residues. Over residues Asp-218–Asp-240 the composition is skewed to low complexity.

This sequence belongs to the RodZ family.

It localises to the cell inner membrane. Cytoskeletal protein that is involved in cell-shape control through regulation of the length of the long axis. This Escherichia coli O7:K1 (strain IAI39 / ExPEC) protein is Cytoskeleton protein RodZ.